The sequence spans 236 residues: Leucyl/phenylalanyl-tRNA--protein transferase (236 aa).

This sequence belongs to the L/F-transferase family.

It localises to the cytoplasm. It catalyses the reaction N-terminal L-lysyl-[protein] + L-leucyl-tRNA(Leu) = N-terminal L-leucyl-L-lysyl-[protein] + tRNA(Leu) + H(+). The catalysed reaction is N-terminal L-arginyl-[protein] + L-leucyl-tRNA(Leu) = N-terminal L-leucyl-L-arginyl-[protein] + tRNA(Leu) + H(+). It carries out the reaction L-phenylalanyl-tRNA(Phe) + an N-terminal L-alpha-aminoacyl-[protein] = an N-terminal L-phenylalanyl-L-alpha-aminoacyl-[protein] + tRNA(Phe). In terms of biological role, functions in the N-end rule pathway of protein degradation where it conjugates Leu, Phe and, less efficiently, Met from aminoacyl-tRNAs to the N-termini of proteins containing an N-terminal arginine or lysine. The protein is Leucyl/phenylalanyl-tRNA--protein transferase of Vibrio atlanticus (strain LGP32) (Vibrio splendidus (strain Mel32)).